Reading from the N-terminus, the 217-residue chain is MQDTTLHIRHLGKQDYESVWHAMQHYTDTRNSESPDELWIVEHPPVFTQGQAGKSEHILNAGDIPVIQVDRGGQVTYHGPGQLVVYPLIDIKRSKIGVRQLVTHIEQSIINMLAKYDIQAYAKADAPGVYVNERKIASLGLRIRRGCSFHGLALNVDMDLAPFRRINPCGYAGLEMVQSKALGGPQTVTEAGEQLTITFSQLLGYQHLVHHQGLAAS.

Positions 32–207 (SESPDELWIV…TFSQLLGYQH (176 aa)) constitute a BPL/LPL catalytic domain. Substrate-binding positions include 71–78 (RGGQVTYH), 138–140 (SLG), and 151–153 (GLA). Cysteine 169 (acyl-thioester intermediate) is an active-site residue.

This sequence belongs to the LipB family.

It localises to the cytoplasm. It carries out the reaction octanoyl-[ACP] + L-lysyl-[protein] = N(6)-octanoyl-L-lysyl-[protein] + holo-[ACP] + H(+). The protein operates within protein modification; protein lipoylation via endogenous pathway; protein N(6)-(lipoyl)lysine from octanoyl-[acyl-carrier-protein]: step 1/2. Catalyzes the transfer of endogenously produced octanoic acid from octanoyl-acyl-carrier-protein onto the lipoyl domains of lipoate-dependent enzymes. Lipoyl-ACP can also act as a substrate although octanoyl-ACP is likely to be the physiological substrate. The protein is Octanoyltransferase of Shewanella sp. (strain W3-18-1).